Here is a 97-residue protein sequence, read N- to C-terminus: U6-theraphotoxin-Hhn1a 2 (97 aa).

A signal peptide spans 1–33 (MLIKQFSRRPKNMKVQILLAFAALFVLAVGSYA). Residues 34-61 (SESKKLDLRDASFSAMFSADYQLNPQER) constitute a propeptide that is removed on maturation. Cystine bridges form between cysteine 63/cysteine 77, cysteine 70/cysteine 82, and cysteine 76/cysteine 89.

It belongs to the neurotoxin 10 (Hwtx-1) family. 12 (Hntx-12) subfamily. In terms of tissue distribution, expressed by the venom gland.

It localises to the secreted. Functionally, ion channel inhibitor. The sequence is that of U6-theraphotoxin-Hhn1a 2 from Cyriopagopus hainanus (Chinese bird spider).